The chain runs to 58 residues: Small ribosomal subunit protein bS21 (58 aa).

This sequence belongs to the bacterial ribosomal protein bS21 family.

This chain is Small ribosomal subunit protein bS21, found in Lactobacillus johnsonii (strain CNCM I-12250 / La1 / NCC 533).